Here is a 172-residue protein sequence, read N- to C-terminus: Large ribosomal subunit protein uL16 (172 aa).

Belongs to the universal ribosomal protein uL16 family.

The chain is Large ribosomal subunit protein uL16 from Methanocella arvoryzae (strain DSM 22066 / NBRC 105507 / MRE50).